Here is a 254-residue protein sequence, read N- to C-terminus: Precorrin-3B C(17)-methyltransferase (254 aa).

Belongs to the precorrin methyltransferase family.

It catalyses the reaction precorrin-3B + S-adenosyl-L-methionine = precorrin-4 + S-adenosyl-L-homocysteine + 3 H(+). The protein operates within cofactor biosynthesis; adenosylcobalamin biosynthesis; cob(II)yrinate a,c-diamide from precorrin-2 (aerobic route): step 3/10. In terms of biological role, methyltransferase that catalyzes the methylation of C-17 in precorrin-3B to form precorrin-4. This chain is Precorrin-3B C(17)-methyltransferase (cobJ), found in Sinorhizobium sp.